A 607-amino-acid polypeptide reads, in one-letter code: WD repeat-containing protein 1 (607 aa).

WD repeat units follow at residues 4-45 (ELKK…IRNI), 48-87 (PAIA…IWDT), 93-135 (LLKY…LWDT), 138-176 (SVGE…FFEG), 180-218 (KFKF…LYDG), 224-263 (VGNL…IWDV), 270-306 (TTFH…YLDK), 311-351 (RPLR…YWDA), 358-408 (TFTG…KMDV), 432-474 (LKDK…LYSI), 480-518 (KDEG…VFNV), 523-561 (SEQN…VWTL), and 566-604 (ARIK…QWTV).

The protein belongs to the WD repeat AIP1 family.

The protein localises to the cell membrane. The protein resides in the cytoplasm. It localises to the cytoskeleton. It is found in the nucleus. Its function is as follows. Induces disassembly of actin filaments in conjunction with ADF/cofilin family proteins. Doesn't sever actin filaments alone, but caps the barbed ends of filaments severed by cofilin, which blocks annealing and depolymerization and allows more extensive severing by cofilin. The chain is WD repeat-containing protein 1 from Xenopus tropicalis (Western clawed frog).